The following is a 428-amino-acid chain: AP-1 complex subunit mu (428 aa).

Residue Ala-2 is modified to N-acetylalanine; partial. One can recognise an MHD domain in the interval 169-426 (KNEVFLDVVE…VCLSGDYQFR (258 aa)).

It belongs to the adaptor complexes medium subunit family. As to quaternary structure, adaptor protein complex 1 (AP-1) is a heterotetramer composed of two large adaptins (gamma-type subunit and beta-type subunit), a medium adaptin (mu-type subunit) and a small adaptin (sigma-type subunit).

The protein localises to the golgi apparatus. It localises to the trans-Golgi network. Its subcellular location is the cytoplasmic vesicle. It is found in the clathrin-coated vesicle membrane. Its function is as follows. Subunit of clathrin-associated adaptor protein complex 1 that plays a role in protein sorting in the trans-Golgi network (TGN) and endosomes. The AP complexes mediate the recruitment of clathrin to membranes and the recognition of sorting signals within the cytosolic tails of transmembrane cargo molecules. Also involved in early steps of phagocytosis and macropinocytosis. This chain is AP-1 complex subunit mu (apm1), found in Dictyostelium discoideum (Social amoeba).